The sequence spans 430 residues: Enolase (430 aa).

Glutamine 167 provides a ligand contact to (2R)-2-phosphoglycerate. Residue glutamate 209 is the Proton donor of the active site. Mg(2+) contacts are provided by aspartate 246, glutamate 287, and aspartate 314. (2R)-2-phosphoglycerate-binding residues include lysine 339, arginine 368, serine 369, and lysine 390. Residue lysine 339 is the Proton acceptor of the active site.

Belongs to the enolase family. It depends on Mg(2+) as a cofactor.

It localises to the cytoplasm. The protein resides in the secreted. It is found in the cell surface. It catalyses the reaction (2R)-2-phosphoglycerate = phosphoenolpyruvate + H2O. The protein operates within carbohydrate degradation; glycolysis; pyruvate from D-glyceraldehyde 3-phosphate: step 4/5. Catalyzes the reversible conversion of 2-phosphoglycerate (2-PG) into phosphoenolpyruvate (PEP). It is essential for the degradation of carbohydrates via glycolysis. This Prochlorococcus marinus (strain MIT 9312) protein is Enolase.